Consider the following 320-residue polypeptide: Serpentine receptor class gamma-15 (320 aa).

7 helical membrane passes run 29–49 (TISYLIPGGILHLFILHTILV), 57–77 (GSSFFAIFALDSVSSIIIVFI), 85–105 (FLYVPPLCPIVGPFFWASSLI), 151–171 (VSLVIICILPLGGTWNIIISP), 197–217 (LFQSIYILTALVFTFICTSVT), 240–260 (IYISLTFLAAAASQALYAFCT), and 268–288 (LFTAQFLAFDMFTVGSAVILF).

Belongs to the nematode receptor-like protein srg family.

It is found in the membrane. In Caenorhabditis elegans, this protein is Serpentine receptor class gamma-15 (srg-15).